A 345-amino-acid chain; its full sequence is L-threonine 3-dehydrogenase (345 aa).

Residue Cys-38 participates in Zn(2+) binding. Catalysis depends on charge relay system residues Thr-40 and His-43. Zn(2+) is bound by residues His-63, Glu-64, Cys-93, Cys-96, Cys-99, and Cys-107. NAD(+)-binding positions include Ile-176, Asp-196, Arg-201, Leu-263–Thr-265, and Val-287–Thr-288.

This sequence belongs to the zinc-containing alcohol dehydrogenase family. In terms of assembly, homotetramer. Requires Zn(2+) as cofactor.

It localises to the cytoplasm. It carries out the reaction L-threonine + NAD(+) = (2S)-2-amino-3-oxobutanoate + NADH + H(+). The protein operates within amino-acid degradation; L-threonine degradation via oxydo-reductase pathway; glycine from L-threonine: step 1/2. Its function is as follows. Catalyzes the NAD(+)-dependent oxidation of L-threonine to 2-amino-3-ketobutyrate. The polypeptide is L-threonine 3-dehydrogenase (Cutibacterium acnes (strain DSM 16379 / KPA171202) (Propionibacterium acnes)).